The sequence spans 119 residues: Large ribosomal subunit protein bL20 (119 aa).

It belongs to the bacterial ribosomal protein bL20 family.

Binds directly to 23S ribosomal RNA and is necessary for the in vitro assembly process of the 50S ribosomal subunit. It is not involved in the protein synthesizing functions of that subunit. The sequence is that of Large ribosomal subunit protein bL20 from Streptococcus equi subsp. equi (strain 4047).